Here is a 494-residue protein sequence, read N- to C-terminus: Cytochrome P450 2A6 (494 aa).

Positions 107 and 297 each coordinate substrate. Heme is bound at residue C439.

Belongs to the cytochrome P450 family. Heme is required as a cofactor. As to expression, liver.

The protein resides in the endoplasmic reticulum membrane. It is found in the microsome membrane. The catalysed reaction is 1,4-cineole + reduced [NADPH--hemoprotein reductase] + O2 = 2-exo-hydroxy-1,4-cineole + oxidized [NADPH--hemoprotein reductase] + H2O + H(+). Exhibits a high coumarin 7-hydroxylase activity. Can act in the hydroxylation of the anti-cancer drugs cyclophosphamide and ifosphamide. Competent in the metabolic activation of aflatoxin B1. Constitutes the major nicotine C-oxidase. Acts as a 1,4-cineole 2-exo-monooxygenase. Possesses low phenacetin O-deethylation activity. This chain is Cytochrome P450 2A6 (CYP2A6), found in Homo sapiens (Human).